We begin with the raw amino-acid sequence, 223 residues long: Probable GTP-binding protein EngB (223 aa).

Positions 25-199 (TGVEIAFAGR…SRLLQDWFDE (175 aa)) constitute an EngB-type G domain. GTP contacts are provided by residues 33-40 (GRSNAGKS), 60-64 (GRTQH), 78-81 (DLPG), 145-148 (TKAD), and 178-180 (FSS). Ser-40 and Thr-62 together coordinate Mg(2+).

Belongs to the TRAFAC class TrmE-Era-EngA-EngB-Septin-like GTPase superfamily. EngB GTPase family. Requires Mg(2+) as cofactor.

In terms of biological role, necessary for normal cell division and for the maintenance of normal septation. In Nitrosomonas eutropha (strain DSM 101675 / C91 / Nm57), this protein is Probable GTP-binding protein EngB.